The chain runs to 383 residues: Deoxyhypusine synthase-like protein (383 aa).

The protein belongs to the deoxyhypusine synthase family.

This is Deoxyhypusine synthase-like protein from Nostoc sp. (strain PCC 7120 / SAG 25.82 / UTEX 2576).